The following is a 151-amino-acid chain: 3-hydroxyacyl-[acyl-carrier-protein] dehydratase FabZ (151 aa).

Histidine 56 is a catalytic residue.

This sequence belongs to the thioester dehydratase family. FabZ subfamily.

It is found in the cytoplasm. It carries out the reaction a (3R)-hydroxyacyl-[ACP] = a (2E)-enoyl-[ACP] + H2O. Its function is as follows. Involved in unsaturated fatty acids biosynthesis. Catalyzes the dehydration of short chain beta-hydroxyacyl-ACPs and long chain saturated and unsaturated beta-hydroxyacyl-ACPs. In Rhodopseudomonas palustris (strain HaA2), this protein is 3-hydroxyacyl-[acyl-carrier-protein] dehydratase FabZ.